The chain runs to 110 residues: U32-theraphotoxin-Cg1a (110 aa).

The first 19 residues, 1–19, serve as a signal peptide directing secretion; sequence MKHCFLILFTLIVFTVVWS. Residues 20-43 constitute a propeptide that is removed on maturation; sequence LEENEEYPDEDEMIESFMDGYSYR. Cystine bridges form between cysteine 49–cysteine 63, cysteine 56–cysteine 69, cysteine 60–cysteine 105, and cysteine 62–cysteine 80.

This sequence belongs to the neurotoxin 03 (Tx2) family. 02 subfamily. Expressed by the venom gland.

The protein localises to the secreted. Its function is as follows. Probable ion channel inhibitor. The protein is U32-theraphotoxin-Cg1a of Chilobrachys guangxiensis (Chinese earth tiger tarantula).